The following is a 117-amino-acid chain: Modulator protein MzrA (117 aa).

Topologically, residues 1-11 are cytoplasmic; the sequence is MMTNRRFRKPS. The helical transmembrane segment at 12–29 threads the bilayer; it reads AWRLLLLLLPLVVLLSMS. At 30-117 the chain is on the periplasmic side; the sequence is SRRLPDEVML…SNGTSPVTRS (88 aa).

Belongs to the MzrA family. In terms of assembly, interacts with EnvZ.

It is found in the cell inner membrane. Its function is as follows. Modulates the activity of the EnvZ/OmpR two-component regulatory system, probably by directly modulating EnvZ enzymatic activity and increasing stability of phosphorylated OmpR. In Dickeya dadantii (strain 3937) (Erwinia chrysanthemi (strain 3937)), this protein is Modulator protein MzrA.